Reading from the N-terminus, the 97-residue chain is Nuclear protein 2 (97 aa).

The interval 76–97 (LLNGQRKRRQRQLHPKMRTRLT) is disordered. Residues 80–97 (QRKRRQRQLHPKMRTRLT) show a composition bias toward basic residues.

The protein belongs to the NUPR family.

Its subcellular location is the nucleus. Its function is as follows. Acts as a transcriptional repressor by inhibiting gene expression at the NUPR1 promoter in a p53/TP53-dependent manner in cancer cells. Involved in the G1 cell cycle arrest, and in a decrease in cell viability and cell proliferation. Plays a role as a negative regulator of the protumoral factor NUPR1. In Homo sapiens (Human), this protein is Nuclear protein 2.